The sequence spans 148 residues: Lysozyme C (148 aa).

The N-terminal stretch at 1-18 (MKALIVLGLVLLSVMVQG) is a signal peptide. Residues 19 to 148 (KVFERCELAR…VRQYVQGCGV (130 aa)) form the C-type lysozyme domain. 4 disulfides stabilise this stretch: Cys-24-Cys-146, Cys-48-Cys-134, Cys-83-Cys-99, and Cys-95-Cys-113. Catalysis depends on residues Glu-53 and Asp-71.

Belongs to the glycosyl hydrolase 22 family. In terms of assembly, monomer.

The enzyme catalyses Hydrolysis of (1-&gt;4)-beta-linkages between N-acetylmuramic acid and N-acetyl-D-glucosamine residues in a peptidoglycan and between N-acetyl-D-glucosamine residues in chitodextrins.. Functionally, lysozymes have primarily a bacteriolytic function; those in tissues and body fluids are associated with the monocyte-macrophage system and enhance the activity of immunoagents. This chain is Lysozyme C (LYZ), found in Gorilla gorilla gorilla (Western lowland gorilla).